A 57-amino-acid chain; its full sequence is Toxin GhoT (57 aa).

A run of 2 helical transmembrane segments spans residues 7-27 (ILIF…FISH) and 37-57 (AFLV…FSLF).

This sequence belongs to the GhoT/OrtT toxin family.

The protein localises to the cell inner membrane. Functionally, toxic component of a type V toxin-antitoxin (TA) system. Causes membrane damage when induced by MqsR, slowing cell growth and leading to the formation of dormant persister cells; involved with GhoS, its antitoxin, in reducing cell growth during antibacterial stress. Its toxic effects are neutralized by GhoS, which digests ghoT transcripts in a sequence-specific manner. The protein is Toxin GhoT of Escherichia coli O157:H7.